The chain runs to 302 residues: Adipolin (302 aa).

An N-terminal signal peptide occupies residues 1–20; the sequence is MRRWAWAAVVVLLGPQLVLL. Disordered stretches follow at residues 28–68 and 86–110; these read EAQR…GPEF and ALRK…PPGA. A glycan (N-linked (GlcNAc...) asparagine) is linked at N43. Residues 86–100 show a composition bias toward basic and acidic residues; it reads ALRKRCGSRDKKPRD. Positions 147-302 constitute a C1q domain; it reads LRLVGEAFHC…SSFSGLLLGT (156 aa).

This sequence belongs to the adipolin/erythroferrone family. As to quaternary structure, homomultimer; disulfide-linked. May interact with ERFE. In terms of processing, processed into Adipolin fC1QTNF12 and Adipolin gC1QTNF12 by FURIN. Insulin enhances endogenous C1QTNF12 cleavage. As to expression, predominantly expressed by adipose tissues.

Its subcellular location is the secreted. Its function is as follows. Insulin-sensitizing adipocyte-secreted protein (adipokine) that regulates glucose metabolism in liver and adipose tissue. Promotes glucose uptake in adipocytes and suppresses de novo glucose production in hepatocytes via the PI3K-Akt signaling pathway. Administration lead to reduction of blood glucose. Able to attenuate inflammation in fat tissue. In Homo sapiens (Human), this protein is Adipolin.